Consider the following 46-residue polypeptide: Viscotoxin-A2 (46 aa).

Intrachain disulfides connect Cys-3/Cys-40, Cys-4/Cys-32, and Cys-16/Cys-26.

The protein belongs to the plant thionin (TC 1.C.44) family.

It localises to the secreted. In terms of biological role, thionins are small plant proteins which are toxic to animal cells. They seem to exert their toxic effect at the level of the cell membrane. Their precise function is not known. This Viscum album (European mistletoe) protein is Viscotoxin-A2 (THI2.3).